A 512-amino-acid polypeptide reads, in one-letter code: ATP synthase subunit alpha (512 aa).

Position 169–176 (169–176 (GDRQTGKT)) interacts with ATP.

Belongs to the ATPase alpha/beta chains family. As to quaternary structure, F-type ATPases have 2 components, CF(1) - the catalytic core - and CF(0) - the membrane proton channel. CF(1) has five subunits: alpha(3), beta(3), gamma(1), delta(1), epsilon(1). CF(0) has four main subunits: a(1), b(1), b'(1) and c(9-12).

Its subcellular location is the cell inner membrane. The catalysed reaction is ATP + H2O + 4 H(+)(in) = ADP + phosphate + 5 H(+)(out). Produces ATP from ADP in the presence of a proton gradient across the membrane. The alpha chain is a regulatory subunit. In Jannaschia sp. (strain CCS1), this protein is ATP synthase subunit alpha.